Consider the following 278-residue polypeptide: S-adenosylmethionine decarboxylase proenzyme (278 aa).

The tract at residues 96–115 (LTPESLTGESPGPLPGNKPS) is disordered. Ser-126 acts as the Schiff-base intermediate with substrate; via pyruvic acid in catalysis. The residue at position 126 (Ser-126) is a Pyruvic acid (Ser); by autocatalysis. His-131 functions as the Proton acceptor; for processing activity in the catalytic mechanism. The active-site Proton donor; for catalytic activity is the Cys-154.

This sequence belongs to the prokaryotic AdoMetDC family. Type 2 subfamily. Heterooctamer of four alpha and four beta chains arranged as a tetramer of alpha/beta heterodimers. Pyruvate serves as cofactor. Is synthesized initially as an inactive proenzyme. Formation of the active enzyme involves a self-maturation process in which the active site pyruvoyl group is generated from an internal serine residue via an autocatalytic post-translational modification. Two non-identical subunits are generated from the proenzyme in this reaction, and the pyruvate is formed at the N-terminus of the alpha chain, which is derived from the carboxyl end of the proenzyme. The post-translation cleavage follows an unusual pathway, termed non-hydrolytic serinolysis, in which the side chain hydroxyl group of the serine supplies its oxygen atom to form the C-terminus of the beta chain, while the remainder of the serine residue undergoes an oxidative deamination to produce ammonia and the pyruvoyl group blocking the N-terminus of the alpha chain.

The enzyme catalyses S-adenosyl-L-methionine + H(+) = S-adenosyl 3-(methylsulfanyl)propylamine + CO2. It participates in amine and polyamine biosynthesis; S-adenosylmethioninamine biosynthesis; S-adenosylmethioninamine from S-adenosyl-L-methionine: step 1/1. In terms of biological role, catalyzes the decarboxylation of S-adenosylmethionine to S-adenosylmethioninamine (dcAdoMet), the propylamine donor required for the synthesis of the polyamines spermine and spermidine from the diamine putrescine. The protein is S-adenosylmethionine decarboxylase proenzyme of Alkaliphilus metalliredigens (strain QYMF).